A 303-amino-acid polypeptide reads, in one-letter code: Siderophore enterobactin esterase (303 aa).

The protein belongs to the esterase D family. Homodimer.

It carries out the reaction enterobactin + 3 H2O = 3 N-(2,3-dihydroxybenzoyl)-L-serine + 2 H(+). In terms of biological role, displays specific enterobactin (ENB) esterase activity required for intracellular release of iron. Enterobactin is a xenosiderophore that is selectively produced by Gram-negative Enterobacteriaceae. The affinity for enterobactin is quite high, potentially due to the low natural abundance of this xenosiderophore in fungal habitats. Does not hydrolyze triacetylfusarinine C (TAFC). This is Siderophore enterobactin esterase from Emericella nidulans (strain FGSC A4 / ATCC 38163 / CBS 112.46 / NRRL 194 / M139) (Aspergillus nidulans).